The following is a 359-amino-acid chain: Chorismate synthase (359 aa).

Arg-47 serves as a coordination point for NADP(+). Residues 123-125, Gly-283, 298-302, and Arg-326 each bind FMN; these read RSS and KPTSS.

This sequence belongs to the chorismate synthase family. As to quaternary structure, homotetramer. FMNH2 is required as a cofactor.

It carries out the reaction 5-O-(1-carboxyvinyl)-3-phosphoshikimate = chorismate + phosphate. The protein operates within metabolic intermediate biosynthesis; chorismate biosynthesis; chorismate from D-erythrose 4-phosphate and phosphoenolpyruvate: step 7/7. Functionally, catalyzes the anti-1,4-elimination of the C-3 phosphate and the C-6 proR hydrogen from 5-enolpyruvylshikimate-3-phosphate (EPSP) to yield chorismate, which is the branch point compound that serves as the starting substrate for the three terminal pathways of aromatic amino acid biosynthesis. This reaction introduces a second double bond into the aromatic ring system. The chain is Chorismate synthase from Chlamydia abortus (strain DSM 27085 / S26/3) (Chlamydophila abortus).